Consider the following 346-residue polypeptide: Dihydroorotase (346 aa).

2 residues coordinate Zn(2+): His-13 and His-15. Substrate contacts are provided by residues 15–17 (HLR) and Asn-41. 3 residues coordinate Zn(2+): Lys-99, His-136, and His-174. Lys-99 is subject to N6-carboxylysine. His-136 is a substrate binding site. Residue Leu-219 coordinates substrate. Asp-247 lines the Zn(2+) pocket. The active site involves Asp-247. His-251 and Ala-263 together coordinate substrate.

The protein belongs to the metallo-dependent hydrolases superfamily. DHOase family. Class II DHOase subfamily. As to quaternary structure, homodimer. The cofactor is Zn(2+).

The enzyme catalyses (S)-dihydroorotate + H2O = N-carbamoyl-L-aspartate + H(+). It functions in the pathway pyrimidine metabolism; UMP biosynthesis via de novo pathway; (S)-dihydroorotate from bicarbonate: step 3/3. Catalyzes the reversible cyclization of carbamoyl aspartate to dihydroorotate. In Picosynechococcus sp. (strain ATCC 27264 / PCC 7002 / PR-6) (Agmenellum quadruplicatum), this protein is Dihydroorotase.